The primary structure comprises 133 residues: uncharacterized protein (133 aa).

Residues 11 to 31 (YFLISVFLIFIVSGITYFYST) form a helical membrane-spanning segment.

Its subcellular location is the membrane. This is an uncharacterized protein from Borreliella burgdorferi (strain ATCC 35210 / DSM 4680 / CIP 102532 / B31) (Borrelia burgdorferi).